The following is a 430-amino-acid chain: Protein AST2 (430 aa).

Functionally, lipid raft-associated protein involved in the targeting of PMA1 from Golgi to the plasma membrane. May induce clustering of PMA1, which facilitates partition of PMA1 into lipid rafts after leaving the ER its and transport to the cell surface. This is Protein AST2 from Saccharomyces cerevisiae (strain ATCC 204508 / S288c) (Baker's yeast).